The primary structure comprises 84 residues: Putative membrane protein insertion efficiency factor (84 aa).

It belongs to the UPF0161 family.

The protein resides in the cell inner membrane. Its function is as follows. Could be involved in insertion of integral membrane proteins into the membrane. The sequence is that of Putative membrane protein insertion efficiency factor from Shewanella baltica (strain OS195).